The sequence spans 189 residues: GTPase KRas (189 aa).

M1 carries the post-translational modification N-acetylmethionine; in GTPase KRas; alternate. T2 is subject to N-acetylthreonine; in GTPase KRas, N-terminally processed. GTP is bound by residues 10–18 (GAGGVGKSA), 29–35 (VDEYDPT), and 59–60 (AG). An Effector region motif is present at residues 32–40 (YDPTIEDSY). Residue T35 is glycosylated ((Microbial infection) O-linked (Glc) threonine; by P.sordellii toxin TcsL). The residue at position 104 (K104) is an N6-acetyllysine. 116–119 (NKCD) contacts GTP. The tract at residues 166-185 (YRLKKISKEEKTPGCVKIKK) is hypervariable region. K170 is covalently cross-linked (Glycyl lysine isopeptide (Lys-Gly) (interchain with G-Cter in ubiquitin)). C180 carries the S-palmitoyl cysteine lipid modification. N6-palmitoyl lysine attachment occurs at residues K182, K184, and K185. C186 is modified (cysteine methyl ester). Residue C186 is the site of S-farnesyl cysteine attachment. The propeptide at 187–189 (IIM) is removed in mature form.

This sequence belongs to the small GTPase superfamily. Ras family. In terms of assembly, interacts with PHLPP. Interacts (active GTP-bound form preferentially) with RGS14. Interacts (when farnesylated) with PDE6D; this promotes dissociation from the cell membrane. Interacts with SOS1. Interacts (when farnesylated) with GPR31. Interacts with RAP1GDS1. Interacts (active GTP-bound form) with both SHOC2 and PP1c (all isoforms) to form a tertiary complex; SHOC2 and PP1c preferably bind M-Ras/MRAS, but they also bind K-Ras/KRAS, N-Ras/NRAS and H-Ras/HRAS. Interacts (GTP-bound form) with MAPKAP1/SIN1; inhibiting K-Ras/KRAS activity. As to quaternary structure, interacts with GPR31; in a farnelysation-dependent manner. Post-translationally, acetylation at Lys-104 prevents interaction with guanine nucleotide exchange factors (GEFs). Palmitoylated at Lys-182, Lys-184 and Lys-185. Palmitoylation on lysine residues is promoted by palmitoylation at Cys-180. Lysine-depalmitoylation by SIRT2 promotes its localization to endomembranes in endocytic pathways. In terms of processing, ubiquitinated by the BCR(LZTR1) E3 ubiquitin ligase complex at Lys-170 in a non-degradative manner, leading to inhibit Ras signaling by decreasing Ras association with membranes. Post-translationally, (Microbial infection) Glucosylated at Thr-35 by P.sordellii toxin TcsL.

The protein resides in the cell membrane. It is found in the endomembrane system. The protein localises to the cytoplasm. Its subcellular location is the cytosol. The catalysed reaction is GTP + H2O = GDP + phosphate + H(+). Its activity is regulated as follows. Alternates between an inactive form bound to GDP and an active form bound to GTP. Activated by a guanine nucleotide-exchange factor (GEF) and inactivated by a GTPase-activating protein (GAP). Interaction with SOS1 promotes exchange of bound GDP to GTP. Its function is as follows. Ras proteins bind GDP/GTP and possess intrinsic GTPase activity. Plays an important role in the regulation of cell proliferation. Plays a role in promoting oncogenic events by inducing transcriptional silencing of tumor suppressor genes (TSGs) in colorectal cancer (CRC) cells in a ZNF304-dependent manner. This is GTPase KRas (KRAS) from Homo sapiens (Human).